A 636-amino-acid polypeptide reads, in one-letter code: Putative lipase ATG15 (636 aa).

At 1-19 (MYKYGTVVDPAMTTNRRSR) the chain is on the cytoplasmic side. Residues 20–42 (LSGFRCASTARVTATLLLSFLAF) form a helical; Signal-anchor for type II membrane protein membrane-spanning segment. At 43 to 636 (SPSSASSDFG…DDLEFATDEM (594 aa)) the chain is on the lumenal side. Asparagine 211, asparagine 233, asparagine 291, asparagine 315, and asparagine 477 each carry an N-linked (GlcNAc...) asparagine glycan. The tract at residues 478 to 500 (GTETTTTSSPSTTSTTRTRTRTS) is disordered. Low complexity predominate over residues 479–500 (TETTTTSSPSTTSTTRTRTRTS).

It belongs to the AB hydrolase superfamily. Lipase family. In terms of assembly, binds to both phosphatidylinositol (PI) and phosphatidylinositol 3,5-bisphosphate (PIP2).

The protein localises to the endosome. The protein resides in the multivesicular body membrane. It is found in the prevacuolar compartment membrane. The catalysed reaction is a triacylglycerol + H2O = a diacylglycerol + a fatty acid + H(+). Its function is as follows. Lipase which is essential for lysis of subvacuolar cytoplasm to vacuole targeted bodies and intravacuolar autophagic bodies. Involved in the lysis of intravacuolar multivesicular body (MVB) vesicles. The intravacuolar membrane disintegration by ATG15 is critical to life span extension. Autophagy is required for proper vegetative growth, asexual/sexual reproduction, and full virulence. Autophagy is particularly involved in the biosynthesis of deoxynivalenol (DON), an important virulence determinant. In Gibberella zeae (strain ATCC MYA-4620 / CBS 123657 / FGSC 9075 / NRRL 31084 / PH-1) (Wheat head blight fungus), this protein is Putative lipase ATG15.